The primary structure comprises 716 residues: Cyclic nucleotide-gated ion channel 1 (716 aa).

At 1 to 97 (MNFRQEKFVR…QGPFLQRWNK (97 aa)) the chain is on the cytoplasmic side. A helical transmembrane segment spans residues 98-118 (IFVLACIIAVSLDPLFFYVPI). The Extracellular segment spans residues 119 to 132 (IDDAKKCLGIDKKM). The helical transmembrane segment at 133-153 (EITASVLRSFTDVFYVLHIIF) threads the bilayer. At 154-187 (QFRTGFIAPSSRVFGRGVLVEDKREIAKRYLSSH) the chain is on the cytoplasmic side. The helical transmembrane segment at 188–208 (FIIDILAVLPLPQMVILIIIP) threads the bilayer. At 209–220 (HMRGSSSLNTKN) the chain is on the extracellular side. Residues 221–241 (MLKFIVFFQYIPRFIRIYPLY) form a helical membrane-spanning segment. Residues 242–259 (KEVTRTSGILTETAWAGA) lie on the Cytoplasmic side of the membrane. A helical membrane pass occupies residues 260-280 (AFNLFLYMLASHVFGAFWYLF). At 281-379 (SIERETVCWK…GQNLKTSTYI (99 aa)) the chain is on the extracellular side. A helical transmembrane segment spans residues 380 to 400 (WEICFAVFISIAGLVLFSFLI). Residues 401–716 (GNMQTYLQST…PAEPDFNSDD (316 aa)) lie on the Cytoplasmic side of the membrane. A nucleoside 3',5'-cyclic phosphate is bound by residues 486-610 (MFEK…SKQL) and Glu-557. The tract at residues 602–617 (FRRLHSKQLRHTFRYY) is calmodulin-binding. An IQ domain is found at 622–651 (KTWAACFIQAAWRRYIKKKLEESLKEEENR). The interval 689–716 (SVRKPRMPERMPPMLLQKPAEPDFNSDD) is disordered.

The protein belongs to the cyclic nucleotide-gated cation channel (TC 1.A.1.5) family. Homotetramer or heterotetramer (Potential). Binds calmodulin-2/3/5 with a higher affinity than calmodulin-1/4. In terms of tissue distribution, expressed in the whole plant but only weakly in roots.

The protein resides in the cell membrane. In terms of biological role, acts as a cyclic nucleotide-gated ion channel. Can be activated by cyclic AMP which leads to an opening of the cation channel. May be responsible for cAMP-induced calcium entry in cells and thus should be involved in the calcium signal transduction. Could transport K(+), Na(+) and Pb(2+). The protein is Cyclic nucleotide-gated ion channel 1 (CNGC1) of Arabidopsis thaliana (Mouse-ear cress).